A 334-amino-acid polypeptide reads, in one-letter code: NAD-dependent protein deacetylase sirtuin-3 (334 aa).

Residues 53–315 (SSEKKFSLQD…ERLVDLLGWT (263 aa)) enclose the Deacetylase sirtuin-type domain. Lys57 is modified (N6-succinyllysine). Residues 80 to 100 (GAGI…SGLY) and 163 to 166 (QNID) contribute to the NAD(+) site. Residue His183 is the Proton acceptor of the active site. The Zn(2+) site is built by Cys191, Cys194, Cys215, and Cys218. Residues 254–256 (GTS) and 279–281 (NRD) contribute to the NAD(+) site.

It belongs to the sirtuin family. Class I subfamily. Upon metabolic stress, forms a complex composed of FOXO3, SIRT3 and mitochondrial RNA polymerase POLRMT; the complex is recruited to mtDNA in a SIRT3-dependent manner. Also forms a complex composed of FOXO3, SIRT3, TFAM and POLRMT. Interacts with NDUFA9, ACSS1, IDH2 and GDH. Interacts with PCCA. The cofactor is Zn(2+). As to expression, expressed in cardiomyocytes (at protein level). Expressed in the brain, liver, kidney and testes. Expressed in skeletal muscles (at protein level).

It is found in the mitochondrion matrix. The protein localises to the cytoplasm. It carries out the reaction N(6)-acetyl-L-lysyl-[protein] + NAD(+) + H2O = 2''-O-acetyl-ADP-D-ribose + nicotinamide + L-lysyl-[protein]. It catalyses the reaction N(6)-[(S)-lactoyl]-L-lysyl-[protein] + NAD(+) + H2O = 2''-O-(S)-lactoyl-ADP-D-ribose + nicotinamide + L-lysyl-[protein]. Its function is as follows. NAD-dependent protein deacetylase. Activates or deactivates mitochondrial target proteins by deacetylating key lysine residues. Known targets include ACSS1, IDH, GDH, PDHA1, SOD2, LCAD, SDHA, MRPL12 and the ATP synthase subunit ATP5PO. Contributes to the regulation of the cellular energy metabolism. Important for regulating tissue-specific ATP levels. In response to metabolic stress, deacetylates transcription factor FOXO3 and recruits FOXO3 and mitochondrial RNA polymerase POLRMT to mtDNA to promote mtDNA transcription. Acts as a regulator of ceramide metabolism by mediating deacetylation of ceramide synthases CERS1, CERS2 and CERS6, thereby increasing their activity and promoting mitochondrial ceramide accumulation. Regulates hepatic lipogenesis. Uses NAD(+) substrate imported by SLC25A47, triggering downstream activation of PRKAA1/AMPK-alpha signaling cascade that ultimately downregulates sterol regulatory element-binding protein (SREBP) transcriptional activities and ATP-consuming lipogenesis to restore cellular energy balance. In addition to protein deacetylase activity, also acts as a protein-lysine deacylase by mediating delactylation of proteins, such as CCNE2 and 'Lys-16' of histone H4 (H4K16la). This Mus musculus (Mouse) protein is NAD-dependent protein deacetylase sirtuin-3.